Reading from the N-terminus, the 105-residue chain is D-galactoside-specific lectin (105 aa).

An SUEL-type lectin domain is found at 13–103; that stretch reads VCEDSSLTIS…KYLAVTYICS (91 aa).

As to quaternary structure, homodimer; disulfide-linked.

It is found in the cytoplasm. In terms of biological role, this protein binds D-galactoside. May have an important role in the activation of eggs (triggered by fertilization), or in their subsequent differentiation. The dimeric form is essential for hemagglutination activity. In Heliocidaris crassispina (Sea urchin), this protein is D-galactoside-specific lectin.